A 176-amino-acid chain; its full sequence is Dual-action ribosomal maturation protein DarP (176 aa).

It belongs to the DarP family.

Its subcellular location is the cytoplasm. Its function is as follows. Member of a network of 50S ribosomal subunit biogenesis factors which assembles along the 30S-50S interface, preventing incorrect 23S rRNA structures from forming. Promotes peptidyl transferase center (PTC) maturation. In Actinobacillus pleuropneumoniae serotype 5b (strain L20), this protein is Dual-action ribosomal maturation protein DarP.